Reading from the N-terminus, the 136-residue chain is Monothiol glutaredoxin-S3 (136 aa).

One can recognise a Glutaredoxin domain in the interval 18 to 135 (EREVRRAVEE…PVLKQAGALW (118 aa)). Cys-38 serves as a coordination point for [2Fe-2S] cluster. Positions 133-136 (ALWL) match the Responsive for interaction with TGA factors motif.

This sequence belongs to the glutaredoxin family. CC-type subfamily.

It localises to the cytoplasm. The protein localises to the nucleus. May only reduce GSH-thiol disulfides, but not protein disulfides. In Oryza sativa subsp. japonica (Rice), this protein is Monothiol glutaredoxin-S3 (GRXS3).